A 740-amino-acid chain; its full sequence is Isocitrate dehydrogenase [NADP] 2 (740 aa).

NADP(+) contacts are provided by asparagine 83 and serine 85. D-threo-isocitrate contacts are provided by serine 130, asparagine 133, arginine 137, arginine 143, and lysine 253. Position 133 (asparagine 133) interacts with NADP(+). Aspartate 348 contributes to the Mg(2+) binding site. D-threo-isocitrate contacts are provided by tyrosine 418 and arginine 546. Positions 547 and 551 each coordinate Mg(2+). Residues serine 584, histidine 588, arginine 599, aspartate 601, and arginine 648 each coordinate NADP(+).

It belongs to the monomeric-type IDH family. Monomer. It depends on Mg(2+) as a cofactor. Requires Mn(2+) as cofactor.

The catalysed reaction is D-threo-isocitrate + NADP(+) = 2-oxoglutarate + CO2 + NADPH. With respect to regulation, IDH activity is not significantly affected by monovalent cations. The combined addition of Mn(2+) and another divalent cation results in the decrease of the activity. Functionally, catalyzes the oxidative decarboxylation of isocitrate to 2-oxoglutarate and carbon dioxide with the concomitant reduction of NADP(+). Cannot use NAD(+). The chain is Isocitrate dehydrogenase [NADP] 2 from Psychrobacter sp. (strain 13A).